The sequence spans 393 residues: Elongation factor Tu (393 aa).

Positions 10-203 constitute a tr-type G domain; it reads KPHVNIGTIG…AVDDYIPEPV (194 aa). Residues 19–26 are G1; sequence GHVDHGKT. GTP is bound at residue 19-26; it reads GHVDHGKT. Threonine 26 serves as a coordination point for Mg(2+). Positions 60–64 are G2; the sequence is GITIS. The interval 81–84 is G3; the sequence is DCPG. Residues 81–85 and 136–139 each bind GTP; these read DCPGH and NKVD. The tract at residues 136 to 139 is G4; the sequence is NKVD. The G5 stretch occupies residues 173 to 175; sequence SAL.

The protein belongs to the TRAFAC class translation factor GTPase superfamily. Classic translation factor GTPase family. EF-Tu/EF-1A subfamily. As to quaternary structure, monomer.

The protein resides in the cytoplasm. The catalysed reaction is GTP + H2O = GDP + phosphate + H(+). Its function is as follows. GTP hydrolase that promotes the GTP-dependent binding of aminoacyl-tRNA to the A-site of ribosomes during protein biosynthesis. The chain is Elongation factor Tu from Chlorobaculum parvum (strain DSM 263 / NCIMB 8327) (Chlorobium vibrioforme subsp. thiosulfatophilum).